Here is a 58-residue protein sequence, read N- to C-terminus: Large ribosomal subunit protein uL30 (58 aa).

This sequence belongs to the universal ribosomal protein uL30 family. As to quaternary structure, part of the 50S ribosomal subunit.

This Pseudomonas savastanoi pv. phaseolicola (strain 1448A / Race 6) (Pseudomonas syringae pv. phaseolicola (strain 1448A / Race 6)) protein is Large ribosomal subunit protein uL30.